The following is a 337-amino-acid chain: GTPase Obg (337 aa).

The Obg domain occupies 1–159; it reads MQFIDYVKIY…RWVILELKLL (159 aa). Positions 160–331 constitute an OBG-type G domain; that stretch reads ADVGLIGLPN…LLHYLSEKVG (172 aa). Residues 166–173, 191–195, 213–216, 283–286, and 312–314 each bind GTP; these read GLPNAGKS, FTTLI, DIPG, TKID, and SAV. Residues Ser173 and Thr193 each coordinate Mg(2+).

Belongs to the TRAFAC class OBG-HflX-like GTPase superfamily. OBG GTPase family. As to quaternary structure, monomer. It depends on Mg(2+) as a cofactor.

The protein resides in the cytoplasm. In terms of biological role, an essential GTPase which binds GTP, GDP and possibly (p)ppGpp with moderate affinity, with high nucleotide exchange rates and a fairly low GTP hydrolysis rate. Plays a role in control of the cell cycle, stress response, ribosome biogenesis and in those bacteria that undergo differentiation, in morphogenesis control. This is GTPase Obg from Thermodesulfovibrio yellowstonii (strain ATCC 51303 / DSM 11347 / YP87).